The following is a 183-amino-acid chain: uncharacterized protein (183 aa).

The chain crosses the membrane as a helical span at residues 7–23 (LFFTALCFGLTGCIAPP).

The protein localises to the membrane. This is an uncharacterized protein from Haemophilus influenzae (strain ATCC 51907 / DSM 11121 / KW20 / Rd).